Consider the following 340-residue polypeptide: Probable quinone oxidoreductase (340 aa).

It belongs to the zinc-containing alcohol dehydrogenase family. Quinone oxidoreductase subfamily.

It catalyses the reaction 2 a quinone + NADPH + H(+) = 2 a 1,4-benzosemiquinone + NADP(+). The polypeptide is Probable quinone oxidoreductase (Leishmania amazonensis).